The sequence spans 432 residues: Glutamate-1-semialdehyde 2,1-aminomutase (432 aa).

Residue lysine 265 is modified to N6-(pyridoxal phosphate)lysine.

This sequence belongs to the class-III pyridoxal-phosphate-dependent aminotransferase family. HemL subfamily. As to quaternary structure, homodimer. Requires pyridoxal 5'-phosphate as cofactor.

It localises to the cytoplasm. It catalyses the reaction (S)-4-amino-5-oxopentanoate = 5-aminolevulinate. It participates in porphyrin-containing compound metabolism; protoporphyrin-IX biosynthesis; 5-aminolevulinate from L-glutamyl-tRNA(Glu): step 2/2. In Histophilus somni (strain 129Pt) (Haemophilus somnus), this protein is Glutamate-1-semialdehyde 2,1-aminomutase.